A 238-amino-acid chain; its full sequence is Ribonuclease PH (238 aa).

Phosphate is bound by residues arginine 86 and 124–126 (GTR).

Belongs to the RNase PH family. In terms of assembly, homohexameric ring arranged as a trimer of dimers.

It catalyses the reaction tRNA(n+1) + phosphate = tRNA(n) + a ribonucleoside 5'-diphosphate. Functionally, phosphorolytic 3'-5' exoribonuclease that plays an important role in tRNA 3'-end maturation. Removes nucleotide residues following the 3'-CCA terminus of tRNAs; can also add nucleotides to the ends of RNA molecules by using nucleoside diphosphates as substrates, but this may not be physiologically important. Probably plays a role in initiation of 16S rRNA degradation (leading to ribosome degradation) during starvation. This chain is Ribonuclease PH, found in Photobacterium profundum (strain SS9).